The chain runs to 266 residues: Undecaprenyl-diphosphatase (266 aa).

The next 7 helical transmembrane spans lie at 41–61 (YAYSLGLFLEAASVLAALIYF), 82–102 (LVYILVTTLVTAVVGLPLYYV), 106–126 (WLVVGHSAGFLMIVLGLAVVL), 159–179 (AVSVLPGLSRSGATVTALLLL), 191–211 (FVLVPVAGLGATALAYLSEGG), 213–233 (VATAEALLAMAIGIVISIITI), and 246–266 (VLVNVVIGLLAIAGGLLRIIF).

The protein belongs to the UppP family.

The protein resides in the cell membrane. The catalysed reaction is di-trans,octa-cis-undecaprenyl diphosphate + H2O = di-trans,octa-cis-undecaprenyl phosphate + phosphate + H(+). Catalyzes the dephosphorylation of undecaprenyl diphosphate (UPP). The protein is Undecaprenyl-diphosphatase of Pyrobaculum aerophilum (strain ATCC 51768 / DSM 7523 / JCM 9630 / CIP 104966 / NBRC 100827 / IM2).